We begin with the raw amino-acid sequence, 323 residues long: Pectate lyase A (323 aa).

Positions 1–31 are cleaved as a signal peptide; the sequence is MTNFKWIVAAAGLLFGQVLAAPTATSTHAKR. Residue N95 is glycosylated (N-linked (GlcNAc...) asparagine). Ca(2+) contacts are provided by D136, D165, and D169. R222 is an active-site residue.

The protein belongs to the polysaccharide lyase 1 family. Ca(2+) is required as a cofactor.

The protein resides in the secreted. It catalyses the reaction Eliminative cleavage of (1-&gt;4)-alpha-D-galacturonan to give oligosaccharides with 4-deoxy-alpha-D-galact-4-enuronosyl groups at their non-reducing ends.. Its function is as follows. Pectinolytic enzyme consist of four classes of enzymes: pectin lyase, polygalacturonase, pectin methylesterase and rhamnogalacturonase. Among pectinolytic enzymes, pectin lyase is the most important in depolymerization of pectin, since it cleaves internal glycosidic bonds of highly methylated pectins. Favors pectate, the anion, over pectin, the methyl ester. The polypeptide is Pectate lyase A (plyA) (Aspergillus niger).